The primary structure comprises 234 residues: Large ribosomal subunit protein uL1 (234 aa).

Belongs to the universal ribosomal protein uL1 family. As to quaternary structure, part of the 50S ribosomal subunit.

Its function is as follows. Binds directly to 23S rRNA. The L1 stalk is quite mobile in the ribosome, and is involved in E site tRNA release. Functionally, protein L1 is also a translational repressor protein, it controls the translation of the L11 operon by binding to its mRNA. In Salmonella gallinarum (strain 287/91 / NCTC 13346), this protein is Large ribosomal subunit protein uL1.